The primary structure comprises 100 residues: MTVKTGIAIGLNKGKKVTSMTPAPKISYKKGAASNRTKFVRSLVREIAGLSPYERRLIDLIRNSGEKRARKVAKKRLGSFTRAKAKVEEMNNIIAASRRH.

Position 2 is an N-acetylthreonine (T2).

The protein belongs to the eukaryotic ribosomal protein eL36 family. Component of the large ribosomal subunit (LSU). Mature yeast ribosomes consist of a small (40S) and a large (60S) subunit. The 40S small subunit contains 1 molecule of ribosomal RNA (18S rRNA) and 33 different proteins (encoded by 57 genes). The large 60S subunit contains 3 rRNA molecules (25S, 5.8S and 5S rRNA) and 46 different proteins (encoded by 81 genes). N-terminally acetylated by acetyltransferase NatA.

Its subcellular location is the cytoplasm. In terms of biological role, component of the ribosome, a large ribonucleoprotein complex responsible for the synthesis of proteins in the cell. The small ribosomal subunit (SSU) binds messenger RNAs (mRNAs) and translates the encoded message by selecting cognate aminoacyl-transfer RNA (tRNA) molecules. The large subunit (LSU) contains the ribosomal catalytic site termed the peptidyl transferase center (PTC), which catalyzes the formation of peptide bonds, thereby polymerizing the amino acids delivered by tRNAs into a polypeptide chain. The nascent polypeptides leave the ribosome through a tunnel in the LSU and interact with protein factors that function in enzymatic processing, targeting, and the membrane insertion of nascent chains at the exit of the ribosomal tunnel. This is Large ribosomal subunit protein eL36A from Saccharomyces cerevisiae (strain ATCC 204508 / S288c) (Baker's yeast).